The sequence spans 429 residues: Ribosomal RNA small subunit methyltransferase B (429 aa).

S-adenosyl-L-methionine-binding positions include 254 to 260 (CAGPGGK), D277, D303, and D322. Catalysis depends on C375, which acts as the Nucleophile.

Belongs to the class I-like SAM-binding methyltransferase superfamily. RsmB/NOP family.

It localises to the cytoplasm. The catalysed reaction is cytidine(967) in 16S rRNA + S-adenosyl-L-methionine = 5-methylcytidine(967) in 16S rRNA + S-adenosyl-L-homocysteine + H(+). Its function is as follows. Specifically methylates the cytosine at position 967 (m5C967) of 16S rRNA. The polypeptide is Ribosomal RNA small subunit methyltransferase B (Escherichia coli O6:K15:H31 (strain 536 / UPEC)).